The primary structure comprises 695 residues: Elongation factor G 1 (695 aa).

In terms of domain architecture, tr-type G spans Lys6 to Asp284. GTP-binding positions include Ala15–Thr22, Asp82–His86, and Asn136–Asp139.

It belongs to the TRAFAC class translation factor GTPase superfamily. Classic translation factor GTPase family. EF-G/EF-2 subfamily.

Its subcellular location is the cytoplasm. In terms of biological role, catalyzes the GTP-dependent ribosomal translocation step during translation elongation. During this step, the ribosome changes from the pre-translocational (PRE) to the post-translocational (POST) state as the newly formed A-site-bound peptidyl-tRNA and P-site-bound deacylated tRNA move to the P and E sites, respectively. Catalyzes the coordinated movement of the two tRNA molecules, the mRNA and conformational changes in the ribosome. The protein is Elongation factor G 1 of Syntrophus aciditrophicus (strain SB).